The sequence spans 670 residues: C6 finger domain transcription factor iacK (670 aa).

A disordered region spans residues 1–84 (MNTSPDYAQP…GEPKQSGPTV (84 aa)). Residues 44–54 (GPPPPPPPPPT) show a composition bias toward pro residues. A compositionally biased stretch (low complexity) spans 55–74 (ATATAATAAATTTTAAPSAT). Residues 88–114 (CLACRSKHLKCDGGNPCARCQASESIC) constitute a DNA-binding region (zn(2)-C6 fungal-type). The tract at residues 122 to 157 (GYKGPRRNGTQNPNKRHAAASDDGSPNSNGSNESCP) is disordered. A compositionally biased stretch (low complexity) spans 142–155 (SDDGSPNSNGSNES).

It localises to the nucleus. In terms of biological role, transcription factor; part of the gene cluster that mediates the biosynthesis of iso-A82775C, a enylepoxycyclohexane and biosynthetic precursor of the chloropestolide anticancer natural products. This is C6 finger domain transcription factor iacK from Pestalotiopsis fici (strain W106-1 / CGMCC3.15140).